We begin with the raw amino-acid sequence, 499 residues long: Guanosine-5'-triphosphate,3'-diphosphate pyrophosphatase (499 aa).

The protein belongs to the GppA/Ppx family. GppA subfamily.

It catalyses the reaction guanosine 3'-diphosphate 5'-triphosphate + H2O = guanosine 3',5'-bis(diphosphate) + phosphate + H(+). Its pathway is purine metabolism; ppGpp biosynthesis; ppGpp from GTP: step 2/2. Its function is as follows. Catalyzes the conversion of pppGpp to ppGpp. Guanosine pentaphosphate (pppGpp) is a cytoplasmic signaling molecule which together with ppGpp controls the 'stringent response', an adaptive process that allows bacteria to respond to amino acid starvation, resulting in the coordinated regulation of numerous cellular activities. The chain is Guanosine-5'-triphosphate,3'-diphosphate pyrophosphatase from Klebsiella pneumoniae subsp. pneumoniae (strain ATCC 700721 / MGH 78578).